The following is a 363-amino-acid chain: Cytochrome P450 CYP82D47 (363 aa).

Cys342 is a binding site for heme.

It belongs to the cytochrome P450 family. Requires heme as cofactor.

Its function is as follows. Probable heme-thiolate monooxygenase. This Panax ginseng (Korean ginseng) protein is Cytochrome P450 CYP82D47.